The sequence spans 61 residues: Small ribosomal subunit protein uS14 (61 aa).

Residues Cys24, Cys27, Cys40, and Cys43 each contribute to the Zn(2+) site.

The protein belongs to the universal ribosomal protein uS14 family. Zinc-binding uS14 subfamily. Part of the 30S ribosomal subunit. Contacts proteins S3 and S10. It depends on Zn(2+) as a cofactor.

Binds 16S rRNA, required for the assembly of 30S particles and may also be responsible for determining the conformation of the 16S rRNA at the A site. The sequence is that of Small ribosomal subunit protein uS14 from Petrotoga mobilis (strain DSM 10674 / SJ95).